The following is a 545-amino-acid chain: MSGRAPFIKPVLEYNEHGWGPCEELSVDVPYQPFCKSDRVGKISDWTAPPTERKFANKYVSSFGNSNQYAYFHEDDESTFHLVDTSGFKGFRPFQRGRFRGNTRNNPRTRGRTGRGGAVTGTGGNQPGVGVNERTKYGKGRDNRRQMGRRFGRNAPTRMRESSVVVRSDWVSIEEIDFPRLLKLSLPNVKEGQDVVTCGSLEYYDKTYDRINVKNERPLLKTDRIIHTLTTTDDPVIRRLSKTIGNIFATDEILATIMCCTRSNYSWDVVFDKVGNKIFLDKRDNAQFDLLTVNETALEPPLEEEGSINSPHSLAMEATLINHNFCQQVLRGGDQKKYQFEEPYTLEESGVDLVSIGYRYKQWDLGNNIILIARCKHNGVLQGPNGEVQFLSIRALNEWDSKASNSLEWRQKLDTQHGAVLASELRNNACKLARWTVESVLSGSDQLKLGYVSRVSTRDHLRHVILRTQQFKPQEFSTQINLSMDNAWGILRCLIDIVMKQPDGKYLLMKDPNKPMVRLYDVPENAFESSDEDDLSDDKLFLLSN.

The tract at residues 94 to 148 (FQRGRFRGNTRNNPRTRGRTGRGGAVTGTGGNQPGVGVNERTKYGKGRDNRRQMG) is disordered. The segment covering 95 to 113 (QRGRFRGNTRNNPRTRGRT) has biased composition (basic residues). Residues 114-127 (GRGGAVTGTGGNQP) are compositionally biased toward gly residues. Over residues 133 to 145 (ERTKYGKGRDNRR) the composition is skewed to basic and acidic residues. The tract at residues 287 to 301 (QFDLLTVNETALEPP) is RNA gate.

Belongs to the eIF-3 subunit D family. In terms of assembly, component of the eukaryotic translation initiation factor 3 (eIF-3) complex. The eIF-3 complex interacts with pix.

Its subcellular location is the cytoplasm. MRNA cap-binding component of the eukaryotic translation initiation factor 3 (eIF-3) complex, which is involved in protein synthesis of a specialized repertoire of mRNAs and, together with other initiation factors, stimulates binding of mRNA and methionyl-tRNAi to the 40S ribosome. The eIF-3 complex specifically targets and initiates translation of a subset of mRNAs involved in cell proliferation. In the eIF-3 complex, eif3d specifically recognizes and binds the 7-methylguanosine cap of a subset of mRNAs. The protein is Eukaryotic translation initiation factor 3 subunit D-2 of Drosophila pseudoobscura pseudoobscura (Fruit fly).